A 241-amino-acid polypeptide reads, in one-letter code: Ribulose-phosphate 3-epimerase 2 (241 aa).

S21 is a substrate binding site. Positions 46, 48, and 79 each coordinate a divalent metal cation. The Proton acceptor role is filled by D48. Substrate-binding positions include H79, 155–158 (GFGG), 192–194 (DGG), and 214–215 (GS). D192 provides a ligand contact to a divalent metal cation. D192 serves as the catalytic Proton donor.

The protein belongs to the ribulose-phosphate 3-epimerase family. Requires a divalent metal cation as cofactor.

The enzyme catalyses D-ribulose 5-phosphate = D-xylulose 5-phosphate. It functions in the pathway carbohydrate degradation. Catalyzes the reversible epimerization of D-ribulose 5-phosphate to D-xylulose 5-phosphate. This chain is Ribulose-phosphate 3-epimerase 2, found in Cupriavidus necator (strain ATCC 17699 / DSM 428 / KCTC 22496 / NCIMB 10442 / H16 / Stanier 337) (Ralstonia eutropha).